Reading from the N-terminus, the 264-residue chain is Thymidylate synthase (264 aa).

Residue R21 coordinates dUMP. H51 is a binding site for (6R)-5,10-methylene-5,6,7,8-tetrahydrofolate. 126–127 (RR) lines the dUMP pocket. The Nucleophile role is filled by C146. DUMP-binding positions include 166-169 (RSAD), N177, and 207-209 (HLY). D169 lines the (6R)-5,10-methylene-5,6,7,8-tetrahydrofolate pocket. (6R)-5,10-methylene-5,6,7,8-tetrahydrofolate is bound at residue A263.

The protein belongs to the thymidylate synthase family. Bacterial-type ThyA subfamily. Homodimer.

The protein resides in the cytoplasm. It catalyses the reaction dUMP + (6R)-5,10-methylene-5,6,7,8-tetrahydrofolate = 7,8-dihydrofolate + dTMP. Its pathway is pyrimidine metabolism; dTTP biosynthesis. In terms of biological role, catalyzes the reductive methylation of 2'-deoxyuridine-5'-monophosphate (dUMP) to 2'-deoxythymidine-5'-monophosphate (dTMP) while utilizing 5,10-methylenetetrahydrofolate (mTHF) as the methyl donor and reductant in the reaction, yielding dihydrofolate (DHF) as a by-product. This enzymatic reaction provides an intracellular de novo source of dTMP, an essential precursor for DNA biosynthesis. The protein is Thymidylate synthase of Nitrosomonas europaea (strain ATCC 19718 / CIP 103999 / KCTC 2705 / NBRC 14298).